Here is a 118-residue protein sequence, read N- to C-terminus: MQFKTIFATLAAFAAVASALPTSSSEQNGNGQCAVGQAQCCSQVQKQGKDASDALAGLGLAFNQILDGAIGLDCQQIPVGVLGGAIAIQNTCKNTAVCCQGSANNGLIQTSCTPLSIN.

The N-terminal stretch at 1–19 (MQFKTIFATLAAFAAVASA) is a signal peptide. Intrachain disulfides connect Cys33-Cys98, Cys40-Cys92, Cys41-Cys74, and Cys99-Cys112.

Belongs to the fungal hydrophobin family. As to quaternary structure, self-assembles to form functional amyloid fibrils called rodlets. Self-assembly into fibrillar rodlets occurs spontaneously at hydrophobic:hydrophilic interfaces and the rodlets further associate laterally to form amphipathic monolayers.

It is found in the secreted. Its subcellular location is the cell wall. Its function is as follows. Aerial growth, conidiation, and dispersal of filamentous fungi in the environment rely upon a capability of their secreting small amphipathic proteins called hydrophobins (HPBs) with low sequence identity. Class I can self-assemble into an outermost layer of rodlet bundles on aerial cell surfaces, conferring cellular hydrophobicity that supports fungal growth, development and dispersal; whereas Class II form highly ordered films at water-air interfaces through intermolecular interactions but contribute nothing to the rodlet structure. Hum2 is a class I hydrophobin which that plays a role in, but seems not to be crucial for the formation of aerial hyphae. Hydrophobins of Mycosarcoma maydis have been functionally replaced, at least partially, by repellents. This is Class I hydrophobin hum2 from Mycosarcoma maydis (Corn smut fungus).